We begin with the raw amino-acid sequence, 294 residues long: 4-diphosphocytidyl-2-C-methyl-D-erythritol kinase (294 aa).

Lys15 is a catalytic residue. Position 101-111 (101-111 (PSEAGLGGGSS)) interacts with ATP. Asp143 is an active-site residue.

Belongs to the GHMP kinase family. IspE subfamily.

The enzyme catalyses 4-CDP-2-C-methyl-D-erythritol + ATP = 4-CDP-2-C-methyl-D-erythritol 2-phosphate + ADP + H(+). It participates in isoprenoid biosynthesis; isopentenyl diphosphate biosynthesis via DXP pathway; isopentenyl diphosphate from 1-deoxy-D-xylulose 5-phosphate: step 3/6. Functionally, catalyzes the phosphorylation of the position 2 hydroxy group of 4-diphosphocytidyl-2C-methyl-D-erythritol. In Fusobacterium nucleatum subsp. nucleatum (strain ATCC 25586 / DSM 15643 / BCRC 10681 / CIP 101130 / JCM 8532 / KCTC 2640 / LMG 13131 / VPI 4355), this protein is 4-diphosphocytidyl-2-C-methyl-D-erythritol kinase.